The sequence spans 209 residues: PF03932 family protein CutC (209 aa).

It belongs to the CutC family.

The protein resides in the cytoplasm. Functionally, might participate in the control of copper homeostasis; data from other bacteria suggests it is not involved. This Enterococcus faecalis (strain ATCC 700802 / V583) protein is PF03932 family protein CutC.